The primary structure comprises 956 residues: Isoleucine--tRNA ligase (956 aa).

The 'HIGH' region motif lies at Pro60–His70. An L-isoleucyl-5'-AMP-binding site is contributed by Glu583. The 'KMSKS' region motif lies at Lys624–Ser628. Lys627 contributes to the ATP binding site. Cys921, Cys924, Cys938, and Cys941 together coordinate Zn(2+).

This sequence belongs to the class-I aminoacyl-tRNA synthetase family. IleS type 1 subfamily. As to quaternary structure, monomer. Zn(2+) is required as a cofactor.

It is found in the cytoplasm. The catalysed reaction is tRNA(Ile) + L-isoleucine + ATP = L-isoleucyl-tRNA(Ile) + AMP + diphosphate. Catalyzes the attachment of isoleucine to tRNA(Ile). As IleRS can inadvertently accommodate and process structurally similar amino acids such as valine, to avoid such errors it has two additional distinct tRNA(Ile)-dependent editing activities. One activity is designated as 'pretransfer' editing and involves the hydrolysis of activated Val-AMP. The other activity is designated 'posttransfer' editing and involves deacylation of mischarged Val-tRNA(Ile). The polypeptide is Isoleucine--tRNA ligase (Aquifex aeolicus (strain VF5)).